Reading from the N-terminus, the 113-residue chain is Death-associated protein-like 1.L (113 aa).

Residues 1–57 form a disordered region; the sequence is MAKEQKMQSSPQALKAGHLPAVKAGGMRVSKKQGNEENSAPEKNAKKTLQEKPSSVL.

This sequence belongs to the DAP-DAPL1 family. As to quaternary structure, associates with ribosomes; preventing translation. Interacts with eiF5a (eif5a and eif5a2); preventing translation.

Ribosome-binding protein that promotes ribosome hibernation, a process during which ribosomes are stabilized in an inactive state and preserved from proteasomal degradation. Acts via its association with eiF5a (eif5a and eif5a2) at the polypeptide exit tunnel of the ribosome, preventing mRNA translation. Plays a key role in ribosome hibernation in the mature egg by preventing mRNA translation, leading to ribosome inactivation. Ribosomes, which are produced in large quantities during oogenesis, are stored and translationally repressed in the egg and early embryo. This is Death-associated protein-like 1.L (dapl1.L) from Xenopus laevis (African clawed frog).